A 25-amino-acid chain; its full sequence is Chaperonin GroEL (25 aa).

This sequence belongs to the chaperonin (HSP60) family. As to quaternary structure, forms a cylinder of 14 subunits composed of two heptameric rings stacked back-to-back. Interacts with the co-chaperonin GroES.

The protein localises to the cytoplasm. It carries out the reaction ATP + H2O + a folded polypeptide = ADP + phosphate + an unfolded polypeptide.. Functionally, together with its co-chaperonin GroES, plays an essential role in assisting protein folding. The GroEL-GroES system forms a nano-cage that allows encapsulation of the non-native substrate proteins and provides a physical environment optimized to promote and accelerate protein folding. In Delftia acidovorans (Pseudomonas acidovorans), this protein is Chaperonin GroEL.